The following is a 93-amino-acid chain: Putative pterin-4-alpha-carbinolamine dehydratase (93 aa).

The protein belongs to the pterin-4-alpha-carbinolamine dehydratase family.

The enzyme catalyses (4aS,6R)-4a-hydroxy-L-erythro-5,6,7,8-tetrahydrobiopterin = (6R)-L-erythro-6,7-dihydrobiopterin + H2O. The protein is Putative pterin-4-alpha-carbinolamine dehydratase of Roseiflexus castenholzii (strain DSM 13941 / HLO8).